We begin with the raw amino-acid sequence, 282 residues long: Cell division protein FtsQ (282 aa).

Residues 1-30 (MINIGPPKKRRLRRKGNRFKKTRRVIPWRR) lie on the Cytoplasmic side of the membrane. A helical transmembrane segment spans residues 31 to 51 (LMIGALWGTMALASLGMVVAV). The Periplasmic portion of the chain corresponds to 52 to 282 (ACFAGQMLFA…LDAGELRGKG (231 aa)). Positions 65-133 (FKVERIQVEN…DQLVIRVDER (69 aa)) constitute a POTRA domain.

It belongs to the FtsQ/DivIB family. FtsQ subfamily.

It localises to the cell inner membrane. Essential cell division protein. The chain is Cell division protein FtsQ from Syntrophotalea carbinolica (strain DSM 2380 / NBRC 103641 / GraBd1) (Pelobacter carbinolicus).